The following is a 102-amino-acid chain: RNA-binding protein Hfq (102 aa).

Residues Asp-9–Val-68 enclose the Sm domain. The interval Ser-65 to Glu-102 is disordered. The span at Ala-93 to Glu-102 shows a compositional bias: polar residues.

This sequence belongs to the Hfq family. In terms of assembly, homohexamer.

Functionally, RNA chaperone that binds small regulatory RNA (sRNAs) and mRNAs to facilitate mRNA translational regulation in response to envelope stress, environmental stress and changes in metabolite concentrations. Also binds with high specificity to tRNAs. In Photorhabdus laumondii subsp. laumondii (strain DSM 15139 / CIP 105565 / TT01) (Photorhabdus luminescens subsp. laumondii), this protein is RNA-binding protein Hfq.